The primary structure comprises 389 residues: DEAD-box ATP-dependent RNA helicase CshC (389 aa).

Positions 1–26 match the Q motif motif; the sequence is MIKDMQPFLQQAWEKAGFKELTEIQK. A Helicase ATP-binding domain is found at 29-199; sequence IPTILEGQDV…RDLAVEPQLV (171 aa). 42-49 contributes to the ATP binding site; sequence SPTGTGKT. Positions 147 to 150 match the DEAD box motif; that stretch reads DEFD. A Helicase C-terminal domain is found at 209 to 379; the sequence is LVEHTYIICE…TKPKAPKKKK (171 aa). A disordered region spans residues 368–389; sequence VETKPKAPKKKKPAFTGKKKPR. The segment covering 373-389 has biased composition (basic residues); that stretch reads KAPKKKKPAFTGKKKPR.

The catalysed reaction is ATP + H2O = ADP + phosphate + H(+). Its function is as follows. DEAD-box RNA helicase. Probably has an RNA-dependent ATPase activity and a 3' to 5' RNA helicase activity that uses the energy of ATP hydrolysis to destabilize and unwind short RNA duplexes. In Bacillus cereus (strain ATCC 14579 / DSM 31 / CCUG 7414 / JCM 2152 / NBRC 15305 / NCIMB 9373 / NCTC 2599 / NRRL B-3711), this protein is DEAD-box ATP-dependent RNA helicase CshC (cshC).